The chain runs to 598 residues: UvrABC system protein C (598 aa).

The 81-residue stretch at 11-91 folds into the GIY-YIG domain; it reads QKPGVYIMHN…IKKYRPHYNI (81 aa). Residues 195 to 230 form the UVR domain; it reads KTTIKKLKKDMNRYAKNMEFEKAAMLRDQIDTIKIT.

This sequence belongs to the UvrC family. Interacts with UvrB in an incision complex.

It is found in the cytoplasm. The UvrABC repair system catalyzes the recognition and processing of DNA lesions. UvrC both incises the 5' and 3' sides of the lesion. The N-terminal half is responsible for the 3' incision and the C-terminal half is responsible for the 5' incision. In Methanosphaera stadtmanae (strain ATCC 43021 / DSM 3091 / JCM 11832 / MCB-3), this protein is UvrABC system protein C.